The sequence spans 266 residues: Chymotrypsin-like elastase family member 1 (266 aa).

A signal peptide spans 1–16 (MLRFLVFASLVLYGHS). Residues 17–26 (TQDFPETNAR) constitute a propeptide, activation peptide. Residues 27–264 (VVGGAEARRN…YISWMNNVIA (238 aa)) form the Peptidase S1 domain. C56 and C72 are oxidised to a cystine. Catalysis depends on H71, which acts as the Charge relay system. Ca(2+)-binding residues include D85, N87, Q90, and E95. D119 acts as the Charge relay system in catalysis. 3 disulfide bridges follow: C153–C220, C184–C200, and C210–C240. S214 (charge relay system) is an active-site residue.

This sequence belongs to the peptidase S1 family. Elastase subfamily. Ca(2+) is required as a cofactor. Pancreas.

The protein localises to the secreted. It catalyses the reaction Hydrolysis of proteins, including elastin. Preferential cleavage: Ala-|-Xaa.. Serine proteases that hydrolyze many proteins in addition to elastin. The chain is Chymotrypsin-like elastase family member 1 (Cela1) from Rattus norvegicus (Rat).